A 432-amino-acid polypeptide reads, in one-letter code: Gamma-glutamyl phosphate reductase (432 aa).

Belongs to the gamma-glutamyl phosphate reductase family.

The protein localises to the cytoplasm. The catalysed reaction is L-glutamate 5-semialdehyde + phosphate + NADP(+) = L-glutamyl 5-phosphate + NADPH + H(+). Its pathway is amino-acid biosynthesis; L-proline biosynthesis; L-glutamate 5-semialdehyde from L-glutamate: step 2/2. Its function is as follows. Catalyzes the NADPH-dependent reduction of L-glutamate 5-phosphate into L-glutamate 5-semialdehyde and phosphate. The product spontaneously undergoes cyclization to form 1-pyrroline-5-carboxylate. The sequence is that of Gamma-glutamyl phosphate reductase from Methylorubrum extorquens (strain CM4 / NCIMB 13688) (Methylobacterium extorquens).